The primary structure comprises 512 residues: Cytochrome P450 77A4 (512 aa).

Residues 9–29 form a helical membrane-spanning segment; that stretch reads PTSLDFTFFAIIISGFVFIIT. Cys456 serves as a coordination point for heme.

It belongs to the cytochrome P450 family. Requires heme as cofactor.

The protein localises to the membrane. Functionally, catalyzes the epoxidation of physiological unsaturated fatty acids in vitro. Can use laurate, oleate, linoleate, linolenate and vernolate as substrate. The polypeptide is Cytochrome P450 77A4 (CYP77A4) (Arabidopsis thaliana (Mouse-ear cress)).